The primary structure comprises 271 residues: Peroxisomal biogenesis factor 2 (271 aa).

Topologically, residues 1-2 (MS) are peroxisomal matrix. The chain crosses the membrane as a helical span at residues 3–29 (RVAQLDSIALDKELYGQFWSEFNAAFN). Residues 30–33 (TSEH) are Cytoplasmic-facing. Residues 34-60 (KEEWELALNTVVFMCATRFLPHYGSSC) form a helical membrane-spanning segment. Over 61-77 (TYGSALSGVVFQCRKRT) the chain is Peroxisomal matrix. Residues 78–97 (LYVVTVLAGYVWKKITHIIF) traverse the membrane as a helical segment. Residues 98–101 (NGPH) are Cytoplasmic-facing. Residues 102-133 (CGNQMMWLKLYKWVNLLYHGCDVTNFLRFLAA) form a helical membrane-spanning segment. Over 134 to 175 (EGPNARAFLSPLYRAFNVHSTRLIRDGSAIASEFYSNSVFAG) the chain is Peroxisomal matrix. A helical membrane pass occupies residues 176 to 197 (LEYQNRQLLWNALLELFSNTLL). At 198–271 (TKRGLLTFVK…SGRLTASPVY (74 aa)) the chain is on the cytoplasmic side. Zn(2+)-binding residues include Cys222, Cys225, Cys237, Cys238, Cys243, Cys246, Cys256, and Cys259. An RING-type zinc finger spans residues 222–259 (CPRCGGFPTNPYQIACCRANYCYVCVVKALEWSMCDAC).

Belongs to the pex2/pex10/pex12 family. In terms of assembly, component of the PEX2-PEX10-PEX12 retrotranslocation channel, composed of PEX2, PEX10 and PEX12.

It is found in the peroxisome membrane. It catalyses the reaction [E2 ubiquitin-conjugating enzyme]-S-ubiquitinyl-L-cysteine + [acceptor protein]-L-cysteine = [E2 ubiquitin-conjugating enzyme]-L-cysteine + [acceptor protein]-S-ubiquitinyl-L-cysteine.. The protein operates within protein modification; protein ubiquitination. Functionally, E3 ubiquitin-protein ligase component of a retrotranslocation channel required for peroxisome organization by mediating export of the PEX5 receptor from peroxisomes to the cytosol, thereby promoting PEX5 recycling. The retrotranslocation channel is composed of PEX2, PEX10 and PEX12; each subunit contributing transmembrane segments that coassemble into an open channel that specifically allows the passage of PEX5 through the peroxisomal membrane. PEX2 also regulates peroxisome organization by acting as a E3 ubiquitin-protein ligase. PEX2 ubiquitinates PEX5 during its passage through the retrotranslocation channel: catalyzes monoubiquitination of PEX5 at 'Cys-6', a modification that acts as a signal for PEX5 extraction into the cytosol. The protein is Peroxisomal biogenesis factor 2 of Saccharomyces cerevisiae (strain ATCC 204508 / S288c) (Baker's yeast).